The primary structure comprises 207 residues: Myosin light chain 6B (207 aa).

The disordered stretch occupies residues 1–50; it reads MPPKKDAPVKKPAGPSISKPAAKSTPGTPLAKAKAEPAAPQAPAKSQEPP. The segment covering 36–50 has biased composition (low complexity); that stretch reads EPAAPQAPAKSQEPP. EF-hand domains are found at residues 63 to 98, 140 to 175, and 175 to 207; these read DQLEEFREAFELFDRVGDGKILYSQCGDLMRALGQN, GTYEDYLEGLRVFDKEGNGKVMGAELRHVLTTLGEK, and KMTEEEVETVLAGHEDSNGCINYEAFLKHILSL.

In terms of assembly, myosin is a hexamer of 2 heavy chains and 4 light chains.

Functionally, regulatory light chain of myosin. Does not bind calcium. This is Myosin light chain 6B from Mus musculus (Mouse).